We begin with the raw amino-acid sequence, 394 residues long: Acid ceramidase (394 aa).

The signal sequence occupies residues 1–20; the sequence is MLGRSLLTWVLAAAVTCAQA. Cysteine 30 and cysteine 339 are joined by a disulfide. The active-site Nucleophile is cysteine 142. Residues asparagine 194, asparagine 258, asparagine 285, and asparagine 341 are each glycosylated (N-linked (GlcNAc...) asparagine). A disulfide bridge links cysteine 387 with cysteine 391.

It belongs to the acid ceramidase family. Heterodimer; disulfide-linked. The heterodimer is composed of the disulfide-linked alpha and beta chains produced by autocatalytic cleavage of the precursor. N-glycosylated. In terms of processing, proteolytically cleaved into two chains alpha and beta that remain associated via a disulfide bond. Cleavage gives rise to a conformation change that activates the enzyme. The same catalytic Cys residue mediates the autoproteolytic cleavage and subsequent hydrolysis of lipid substrates. The beta chain may undergo an additional C-terminal processing.

It is found in the lysosome. The protein localises to the secreted. The enzyme catalyses an N-acylsphing-4-enine + H2O = sphing-4-enine + a fatty acid. It carries out the reaction N-dodecanoylsphing-4-enine + H2O = dodecanoate + sphing-4-enine. The catalysed reaction is N-tetradecanoylsphing-4-enine + H2O = tetradecanoate + sphing-4-enine. It catalyses the reaction N-hexadecanoylsphing-4-enine + H2O = sphing-4-enine + hexadecanoate. The enzyme catalyses N-octadecanoylsphing-4-enine + H2O = sphing-4-enine + octadecanoate. It carries out the reaction N-dodecanoyl-(4R)-hydroxysphinganine + H2O = (4R)-hydroxysphinganine + dodecanoate. The catalysed reaction is N-(dodecanoyl)-sphinganine + H2O = dodecanoate + sphinganine. It catalyses the reaction N-(acetyl)-sphing-4-enine + H2O = sphing-4-enine + acetate. The enzyme catalyses N-(hexanoyl)sphing-4-enine + H2O = hexanoate + sphing-4-enine. It carries out the reaction N-octanoylsphing-4-enine + H2O = octanoate + sphing-4-enine. The catalysed reaction is N-(9Z-octadecenoyl)-sphing-4-enine + H2O = sphing-4-enine + (9Z)-octadecenoate. It catalyses the reaction N-dodecanoylethanolamine + H2O = dodecanoate + ethanolamine. Its pathway is lipid metabolism; sphingolipid metabolism. In terms of biological role, lysosomal ceramidase that hydrolyzes sphingolipid ceramides into sphingosine and free fatty acids at acidic pH. Ceramides, sphingosine, and its phosphorylated form sphingosine-1-phosphate are bioactive lipids that mediate cellular signaling pathways regulating several biological processes including cell proliferation, apoptosis and differentiation. Has a higher catalytic efficiency towards C12-ceramides versus other ceramides. Also catalyzes the reverse reaction allowing the synthesis of ceramides from fatty acids and sphingosine. For the reverse synthetic reaction, the natural sphingosine D-erythro isomer is more efficiently utilized as a substrate compared to D-erythro-dihydrosphingosine and D-erythro-phytosphingosine, while the fatty acids with chain lengths of 12 or 14 carbons are the most efficiently used. Also has an N-acylethanolamine hydrolase activity. By regulating the levels of ceramides, sphingosine and sphingosine-1-phosphate in the epidermis, mediates the calcium-induced differentiation of epidermal keratinocytes. Also indirectly regulates tumor necrosis factor/TNF-induced apoptosis. By regulating the intracellular balance between ceramides and sphingosine, in adrenocortical cells, probably also acts as a regulator of steroidogenesis. This Rattus norvegicus (Rat) protein is Acid ceramidase.